Reading from the N-terminus, the 916-residue chain is Inter-alpha-trypsin inhibitor heavy chain H4 (916 aa).

The N-terminal stretch at 1 to 27 is a signal peptide; it reads MKTPAPGRIHSIVLVLLSLAVLQTSKA. In terms of domain architecture, VIT spans 28 to 149; the sequence is QKVQNDIDIY…KVTFELVYEE (122 aa). 2 N-linked (GlcNAc...) asparagine glycosylation sites follow: Asn-82 and Asn-208. The VWFA domain occupies 275–458; sequence NVIFVIDKSG…LQLQDFYQEV (184 aa). N-linked (GlcNAc...) asparagine glycosylation is present at Asn-518. 2 disordered regions span residues 597–616 and 678–701; these read PEGQEQSQVAEKPVEDESRG and PLAPASAPSPTSGPGGASHDTDFR. Residues 678-689 are compositionally biased toward low complexity; sequence PLAPASAPSPTS. O-linked (GalNAc...) serine glycosylation is present at Ser-683. 3 O-linked (GalNAc...) threonine glycosylation sites follow: Thr-705, Thr-706, and Thr-708. The cysteines at positions 733 and 911 are disulfide-linked.

Belongs to the ITIH family. In terms of assembly, interacts (via C-terminus) with DNAJC1 (via SANT 2 domain). Post-translationally, appears to be both N- and O-glycosylated.

Its subcellular location is the secreted. Its function is as follows. Type II acute-phase protein (APP) involved in inflammatory responses to trauma. May also play a role in liver development or regeneration. This Bos taurus (Bovine) protein is Inter-alpha-trypsin inhibitor heavy chain H4 (ITIH4).